The following is a 612-amino-acid chain: Elongation factor 4 (612 aa).

The tr-type G domain maps to 11-193 (KHIRNFSIIA…RIVTDVPAPS (183 aa)). GTP contacts are provided by residues 23 to 28 (DHGKST) and 140 to 143 (NKVD).

Belongs to the TRAFAC class translation factor GTPase superfamily. Classic translation factor GTPase family. LepA subfamily.

The protein localises to the cell membrane. The catalysed reaction is GTP + H2O = GDP + phosphate + H(+). Its function is as follows. Required for accurate and efficient protein synthesis under certain stress conditions. May act as a fidelity factor of the translation reaction, by catalyzing a one-codon backward translocation of tRNAs on improperly translocated ribosomes. Back-translocation proceeds from a post-translocation (POST) complex to a pre-translocation (PRE) complex, thus giving elongation factor G a second chance to translocate the tRNAs correctly. Binds to ribosomes in a GTP-dependent manner. This chain is Elongation factor 4, found in Lacticaseibacillus paracasei (strain ATCC 334 / BCRC 17002 / CCUG 31169 / CIP 107868 / KCTC 3260 / NRRL B-441) (Lactobacillus paracasei).